A 241-amino-acid polypeptide reads, in one-letter code: Phosphoribosylaminoimidazole-succinocarboxamide synthase (241 aa).

Belongs to the SAICAR synthetase family.

It catalyses the reaction 5-amino-1-(5-phospho-D-ribosyl)imidazole-4-carboxylate + L-aspartate + ATP = (2S)-2-[5-amino-1-(5-phospho-beta-D-ribosyl)imidazole-4-carboxamido]succinate + ADP + phosphate + 2 H(+). It participates in purine metabolism; IMP biosynthesis via de novo pathway; 5-amino-1-(5-phospho-D-ribosyl)imidazole-4-carboxamide from 5-amino-1-(5-phospho-D-ribosyl)imidazole-4-carboxylate: step 1/2. This chain is Phosphoribosylaminoimidazole-succinocarboxamide synthase, found in Methanoculleus marisnigri (strain ATCC 35101 / DSM 1498 / JR1).